The chain runs to 172 residues: Protein GrpE (172 aa).

Positions 1 to 23 (MNQDHPECDSEELTQNSPETDPL) are disordered.

Belongs to the GrpE family. In terms of assembly, homodimer.

Its subcellular location is the cytoplasm. Functionally, participates actively in the response to hyperosmotic and heat shock by preventing the aggregation of stress-denatured proteins, in association with DnaK and GrpE. It is the nucleotide exchange factor for DnaK and may function as a thermosensor. Unfolded proteins bind initially to DnaJ; upon interaction with the DnaJ-bound protein, DnaK hydrolyzes its bound ATP, resulting in the formation of a stable complex. GrpE releases ADP from DnaK; ATP binding to DnaK triggers the release of the substrate protein, thus completing the reaction cycle. Several rounds of ATP-dependent interactions between DnaJ, DnaK and GrpE are required for fully efficient folding. The polypeptide is Protein GrpE (Xylella fastidiosa (strain 9a5c)).